The sequence spans 485 residues: Glutamyl-tRNA(Gln) amidotransferase subunit A (485 aa).

Residues lysine 79 and serine 154 each act as charge relay system in the active site. Residue serine 178 is the Acyl-ester intermediate of the active site.

Belongs to the amidase family. GatA subfamily. In terms of assembly, heterotrimer of A, B and C subunits.

It catalyses the reaction L-glutamyl-tRNA(Gln) + L-glutamine + ATP + H2O = L-glutaminyl-tRNA(Gln) + L-glutamate + ADP + phosphate + H(+). Its function is as follows. Allows the formation of correctly charged Gln-tRNA(Gln) through the transamidation of misacylated Glu-tRNA(Gln) in organisms which lack glutaminyl-tRNA synthetase. The reaction takes place in the presence of glutamine and ATP through an activated gamma-phospho-Glu-tRNA(Gln). The protein is Glutamyl-tRNA(Gln) amidotransferase subunit A of Clostridium botulinum (strain Eklund 17B / Type B).